Consider the following 144-residue polypeptide: Maximins 3/H5 (144 aa).

The signal sequence occupies residues 1–18 (MNFKYIFAVSFLIASAYA). Propeptides lie at residues 19 to 43 (RSVQ…REIR) and 74 to 123 (TAEE…KEKR). Leucine amide is present on Leu-143.

Belongs to the bombinin family. In terms of tissue distribution, expressed by the skin glands.

The protein resides in the secreted. Maximin-3 shows antibacterial activity against both Gram-positive and Gram-negative bacteria. It also shows antimicrobial activity against the fungus C.albicans, but not against A.flavus nor P.uticale. It has little hemolytic activity. It possess a significant cytotoxicity against tumor cell lines. It possess a significant anti-HIV activity. It shows high spermicidal activity. In terms of biological role, maximin-H5 shows antibacterial activity only against the Gram-positive bacteria S.aureus. The other bacterial and fungal strains tested were resistant to it. The presence of metal ions, like Zn(2+) and Mg(2+), did not increase its antimicrobial potency. Does not show hemolytic activity (in a concentration up to 80 uM). The sequence is that of Maximins 3/H5 from Bombina maxima (Giant fire-bellied toad).